A 406-amino-acid chain; its full sequence is (R)-benzylsuccinyl-CoA dehydrogenase (406 aa).

It belongs to the acyl-CoA dehydrogenase family. In terms of assembly, homotetramer. Requires FAD as cofactor.

The enzyme catalyses (R)-2-benzylsuccinyl-CoA + oxidized [electron-transfer flavoprotein] + H(+) = (E)-2-benzylidenesuccinyl-CoA + reduced [electron-transfer flavoprotein]. It participates in xenobiotic degradation; toluene degradation. Inhibited by (S)-benzylsuccinyl-CoA. Functionally, catalyzes the oxidation of benzylsuccinyl-CoA to benzylidenesuccinyl-CoA. The sequence is that of (R)-benzylsuccinyl-CoA dehydrogenase (bbsG) from Thauera aromatica.